The sequence spans 376 residues: GDSL esterase/lipase At5g55050 (376 aa).

Residues 1-29 (MPTNNTPFLTIFLLFLGLLRFDSFPGLEA) form the signal peptide. Ser-46 (nucleophile) is an active-site residue. Residues Asn-134 and Asn-245 are each glycosylated (N-linked (GlcNAc...) asparagine). Catalysis depends on residues Asp-340 and His-344.

This sequence belongs to the 'GDSL' lipolytic enzyme family.

Its subcellular location is the secreted. The sequence is that of GDSL esterase/lipase At5g55050 from Arabidopsis thaliana (Mouse-ear cress).